Here is a 310-residue protein sequence, read N- to C-terminus: Homoserine kinase (310 aa).

Pro91–Cys101 lines the ATP pocket.

It belongs to the GHMP kinase family. Homoserine kinase subfamily.

It is found in the cytoplasm. The enzyme catalyses L-homoserine + ATP = O-phospho-L-homoserine + ADP + H(+). Its pathway is amino-acid biosynthesis; L-threonine biosynthesis; L-threonine from L-aspartate: step 4/5. Its function is as follows. Catalyzes the ATP-dependent phosphorylation of L-homoserine to L-homoserine phosphate. The polypeptide is Homoserine kinase (Sodalis glossinidius (strain morsitans)).